The primary structure comprises 263 residues: Aquaporin-8 (263 aa).

Residues 1–38 (MSGEQTPMCSMDLREIKGKETNMADSYHGMSWYEQYIQ) are Cytoplasmic-facing. A helical transmembrane segment spans residues 39 to 59 (PCVVELLGSALFIFIGCLSVI). At Cys-55 the chain carries Cysteine persulfide. A Cysteine sulfenic acid (-SOH) modification is found at Cys-55. Over 60–86 (ENSPNTGLLQPALAHGLALGLIIATLG) the chain is Extracellular. The helical transmembrane segment at 87–107 (NISGGHFNPAVSLAVTLVGGL) threads the bilayer. The NPA 1 motif lies at 94-96 (NPA). Topologically, residues 108 to 109 (KT) are cytoplasmic. The chain crosses the membrane as a helical span at residues 110 to 130 (MLLIPYWVSQLFGGMIGAALA). The Extracellular portion of the chain corresponds to 131–158 (KVVSPEERFWNASGAAFAIVQEQEQVAE). Asn-141 carries N-linked (GlcNAc...) asparagine glycosylation. The chain crosses the membrane as a helical span at residues 159-179 (ALGVEIVMTMLLVLAVCMGAV). Residues 180 to 185 (NEKTMG) are Cytoplasmic-facing. Residues 186–206 (PLAPFSIGFSVIVDILAGGGI) form a helical membrane-spanning segment. Over 207-230 (SGACMNPARAFGPAVMAGYWDFHW) the chain is Extracellular. Residues 212–214 (NPA) carry the NPA 2 motif. Residues 231-251 (IYWLGPLLAGLFVGLLIRLFI) form a helical membrane-spanning segment. Topologically, residues 252–263 (GDEKTRLILKSR) are cytoplasmic.

This sequence belongs to the MIP/aquaporin (TC 1.A.8) family. Post-translationally, N-glycosylated. In terms of processing, sulfenylation at Cys-55(C55-SOH) when hydrogen peroxide flows through the AQP8 channel, making it susceptible to hydrogen sulfide produced by CBS. Persulfidation at Cys-55 is required to gate AQP8 channel; under stress condition, hydrogen peroxide accumulates in the cell leading to CBS activation that produces hydrogen sulfide inducing persulfidation of oxidized Cys-55 (C55-SOH). As to expression, highly expressed in sperm, pancreas and liver. Expressed in hepatocytes, acinal cells of pancreas and salivary gland, and absorptive colonic epithelial cells. Expressed in the myoepithelium of submandibular and parotid glands. Expressed in pancreatic beta-cells. Expressed in testis but not in epididymis. Expressed in small intestine.

The protein resides in the cell membrane. The protein localises to the mitochondrion inner membrane. It is found in the apical cell membrane. Its subcellular location is the basolateral cell membrane. It localises to the smooth endoplasmic reticulum membrane. The catalysed reaction is H2O(in) = H2O(out). The enzyme catalyses NH4(+)(in) = NH4(+)(out). It carries out the reaction H2O2(out) = H2O2(in). It catalyses the reaction formamide(out) = formamide(in). The catalysed reaction is methylamine(out) = methylamine(in). With respect to regulation, reversibly gated by a two-step sulfenylation-persulfidation process in cells undergoing diverse stresses. Its function is as follows. Channel that allows the facilitated permeation of water and uncharged molecules, such as hydrogen peroxide and the neutral form of ammonia (NH3), through cellular membranes such as plasma membrane, inner mitochondrial membrane and endoplasmic reticulum membrane of several tissues. The transport of ammonia neutral form induces a parallel transport of proton, at alkaline pH when the concentration of ammonia is high. However, it is unclear whether the transport of proton takes place via the aquaporin or via an endogenous pathway. Also, may transport ammonia analogs such as formamide and methylamine, a transport favourited at basic pH due to the increase of unprotonated (neutral) form, which is expected to favor diffusion. Does not transport urea or glycerol. The water transport mechanism is mercury- and copper-sensitive and passive in response to osmotic driving forces. At the canicular plasma membrane, mediates the osmotic transport of water toward the bile canaliculus and facilitates the cAMP-induced bile canalicular water secretion, a process involved in bile formation. In addition, mediates the hydrogen peroxide release from hepatocyte mitochondria that modulates the SREBF2-mediated cholesterol synthesis and facilitates the mitochondrial ammonia uptake which is metabolized into urea, mainly under glucagon stimulation. In B cells, transports the CYBB-generated hydrogen peroxide from the external leaflet of the plasma membrane to the cytosol to promote B cell activation and differentiation for signal amplification. In the small intestine and colon system, mediates water transport through mitochondria and apical membrane of epithelial cells. May play an important role in the adaptive response of proximal tubule cells to acidosis possibly facilitating mitochondrial ammonia transport. The polypeptide is Aquaporin-8 (Rattus norvegicus (Rat)).